Here is a 102-residue protein sequence, read N- to C-terminus: Small ribosomal subunit protein uS10 (102 aa).

The protein belongs to the universal ribosomal protein uS10 family. Part of the 30S ribosomal subunit.

Involved in the binding of tRNA to the ribosomes. The protein is Small ribosomal subunit protein uS10 of Leptospira biflexa serovar Patoc (strain Patoc 1 / Ames).